We begin with the raw amino-acid sequence, 327 residues long: GMP reductase (327 aa).

Residue Cys176 is the Thioimidate intermediate of the active site. 205–228 (IIADGGIRTHGDIAKSIRFGASMV) contacts NADP(+).

The protein belongs to the IMPDH/GMPR family. GuaC type 2 subfamily.

It catalyses the reaction IMP + NH4(+) + NADP(+) = GMP + NADPH + 2 H(+). In terms of biological role, catalyzes the irreversible NADPH-dependent deamination of GMP to IMP. It functions in the conversion of nucleobase, nucleoside and nucleotide derivatives of G to A nucleotides, and in maintaining the intracellular balance of A and G nucleotides. In Streptococcus suis (strain 98HAH33), this protein is GMP reductase.